A 309-amino-acid chain; its full sequence is Porphobilinogen deaminase (309 aa).

C244 is subject to S-(dipyrrolylmethanemethyl)cysteine.

Belongs to the HMBS family. Monomer. Requires dipyrromethane as cofactor.

The catalysed reaction is 4 porphobilinogen + H2O = hydroxymethylbilane + 4 NH4(+). The protein operates within porphyrin-containing compound metabolism; protoporphyrin-IX biosynthesis; coproporphyrinogen-III from 5-aminolevulinate: step 2/4. Functionally, tetrapolymerization of the monopyrrole PBG into the hydroxymethylbilane pre-uroporphyrinogen in several discrete steps. In Listeria monocytogenes serovar 1/2a (strain ATCC BAA-679 / EGD-e), this protein is Porphobilinogen deaminase.